A 502-amino-acid chain; its full sequence is ATP synthase subunit alpha (502 aa).

169–176 (GDRQTGKT) serves as a coordination point for ATP.

It belongs to the ATPase alpha/beta chains family. In terms of assembly, F-type ATPases have 2 components, CF(1) - the catalytic core - and CF(0) - the membrane proton channel. CF(1) has five subunits: alpha(3), beta(3), gamma(1), delta(1), epsilon(1). CF(0) has three main subunits: a(1), b(2) and c(9-12). The alpha and beta chains form an alternating ring which encloses part of the gamma chain. CF(1) is attached to CF(0) by a central stalk formed by the gamma and epsilon chains, while a peripheral stalk is formed by the delta and b chains.

It is found in the cell membrane. It carries out the reaction ATP + H2O + 4 H(+)(in) = ADP + phosphate + 5 H(+)(out). Its function is as follows. Produces ATP from ADP in the presence of a proton gradient across the membrane. The alpha chain is a regulatory subunit. The protein is ATP synthase subunit alpha of Clostridium perfringens (strain SM101 / Type A).